A 129-amino-acid chain; its full sequence is MNNFSYFSTIFSIALMSSNAFAGNDTLLVGFCPCIEINTLTLFLSSLYAIKPSDSCSPSYTSNLLNLFCDFVNSSTHLSISVFSSSVLSCFTSCFVIYFYPFFVFDSASYCVFNSSSREGCTSVTIGWG.

Helical transmembrane passes span 3 to 23 (NFSYFSTIFSIALMSSNAFAG), 27 to 47 (LLVGFCPCIEINTLTLFLSSL), and 85 to 105 (SSVLSCFTSCFVIYFYPFFVF).

It is found in the host membrane. The sequence is that of Putative transmembrane protein 10 (SIFV0010) from Sulfolobus islandicus filamentous virus (isolate Iceland/Hveragerdi) (SIFV).